The following is a 489-amino-acid chain: tRNA(Ile)-lysidine synthase (489 aa).

An ATP-binding site is contributed by 35-40; that stretch reads SGGLDS.

This sequence belongs to the tRNA(Ile)-lysidine synthase family.

Its subcellular location is the cytoplasm. The catalysed reaction is cytidine(34) in tRNA(Ile2) + L-lysine + ATP = lysidine(34) in tRNA(Ile2) + AMP + diphosphate + H(+). Ligates lysine onto the cytidine present at position 34 of the AUA codon-specific tRNA(Ile) that contains the anticodon CAU, in an ATP-dependent manner. Cytidine is converted to lysidine, thus changing the amino acid specificity of the tRNA from methionine to isoleucine. The sequence is that of tRNA(Ile)-lysidine synthase from Burkholderia pseudomallei (strain K96243).